Reading from the N-terminus, the 310-residue chain is Aspartate carbamoyltransferase catalytic subunit (310 aa).

Residues Arg59 and Thr60 each coordinate carbamoyl phosphate. Lys87 lines the L-aspartate pocket. Arg109, His139, and Gln142 together coordinate carbamoyl phosphate. Residues Arg172 and Arg224 each contribute to the L-aspartate site. Residues Ala265 and Pro266 each coordinate carbamoyl phosphate.

It belongs to the aspartate/ornithine carbamoyltransferase superfamily. ATCase family. As to quaternary structure, heterododecamer (2C3:3R2) of six catalytic PyrB chains organized as two trimers (C3), and six regulatory PyrI chains organized as three dimers (R2).

The enzyme catalyses carbamoyl phosphate + L-aspartate = N-carbamoyl-L-aspartate + phosphate + H(+). Its pathway is pyrimidine metabolism; UMP biosynthesis via de novo pathway; (S)-dihydroorotate from bicarbonate: step 2/3. Its function is as follows. Catalyzes the condensation of carbamoyl phosphate and aspartate to form carbamoyl aspartate and inorganic phosphate, the committed step in the de novo pyrimidine nucleotide biosynthesis pathway. The polypeptide is Aspartate carbamoyltransferase catalytic subunit (Lactococcus lactis subsp. cremoris (strain MG1363)).